A 609-amino-acid polypeptide reads, in one-letter code: Rhotekin-2 (609 aa).

The REM-1 domain maps to 5-81 (SLRGPALRLA…LQKLEEQIAN (77 aa)). Positions 56-91 (KNLMVCNARLMAYTSELQKLEEQIANQTGRCDVKFE) form a coiled coil. Positions 286 to 393 (EDAFAGFLNQ…WMEAFWQHFF (108 aa)) constitute a PH domain. Disordered stretches follow at residues 495–520 (HDEK…KSQS) and 554–609 (KPMA…QAQV). Residues 569 to 582 (RLSDGEHTDTKTNF) are compositionally biased toward basic and acidic residues.

In terms of tissue distribution, expressed in lymphocytes, CD4 positive T-cells and bone marrow-derived cells. Also expressed in lung, colon, thymus and brain.

Its function is as follows. May play an important role in lymphopoiesis. This Homo sapiens (Human) protein is Rhotekin-2 (RTKN2).